The following is a 1562-amino-acid chain: Cell wall protein RBR3 (1562 aa).

Positions 1-20 (MIIFRKSFFTFWLLLNSVLA) are cleaved as a signal peptide. An N-linked (GlcNAc...) asparagine glycan is attached at N190. Over residues 338–353 (APGTNPTEYTTTITTT) the composition is skewed to low complexity. The interval 338–366 (APGTNPTEYTTTITTTNSAGKPLTETGVV) is disordered. A glycan (N-linked (GlcNAc...) asparagine) is linked at N373. Low complexity-rich tracts occupy residues 383–415 (FPTSSSSSSSSSTVSSTAPSSSSTKPSSSSQPS) and 422–729 (SSSK…ISAT). Disordered stretches follow at residues 383–729 (FPTS…ISAT), 1404–1424 (GSGSDSGSGSGSGSGSGSSSN), and 1455–1486 (YSSGGSGNGVLPSGANNVGSNQTPTVSGGNSN). 3 N-linked (GlcNAc...) asparagine glycosylation sites follow: N602, N679, and N705. Gly residues predominate over residues 1407-1419 (SDSGSGSGSGSGS). Residues 1468-1486 (GANNVGSNQTPTVSGGNSN) show a composition bias toward polar residues. N1538 is lipidated: GPI-anchor amidated asparagine. Positions 1539 to 1562 (SGSKFSVGKSAFIAIILTTFIGFI) are cleaved as a propeptide — removed in mature form.

This sequence belongs to the HYR1/IFF family. The GPI-anchor is attached to the protein in the endoplasmic reticulum and serves to target the protein to the cell surface. There, the glucosamine-inositol phospholipid moiety is cleaved off and the GPI-modified mannoprotein is covalently attached via its lipidless GPI glycan remnant to the 1,6-beta-glucan of the outer cell wall layer.

It localises to the secreted. The protein resides in the cell wall. The protein localises to the membrane. Its function is as follows. GPI-anchored cell wall protein involved in cell wall organization, hyphal growth, as well as in host-fungal interaction and virulence. The protein is Cell wall protein RBR3 (RBR3) of Candida albicans (strain SC5314 / ATCC MYA-2876) (Yeast).